The sequence spans 51 residues: Large ribosomal subunit protein bL33 (51 aa).

It belongs to the bacterial ribosomal protein bL33 family.

In Pseudoalteromonas translucida (strain TAC 125), this protein is Large ribosomal subunit protein bL33.